A 135-amino-acid chain; its full sequence is C-type lectin BpLec (135 aa).

4 cysteine pairs are disulfide-bonded: Cys-3-Cys-14, Cys-31-Cys-131, Cys-38-Cys-133, and Cys-106-Cys-123. The C-type lectin domain maps to 10–132 (MNGLCYKIFD…CESKNAFLCQ (123 aa)). Gln-96, Asp-98, Glu-104, Asn-119, and Asp-120 together coordinate Ca(2+). A Galactose-binding motif is present at residues 96 to 98 (QPD).

The protein belongs to the true venom lectin family. As to quaternary structure, homodimer; disulfide-linked. Expressed by the venom gland.

It localises to the secreted. Its function is as follows. This lectin displays hemagglutinating activity on dog (128'000 HU/mg) and cat erythrocytes, that is inhibited by beta-galactosides (D-galactose, D-lactose, and N-acetyl-D-galactosamine) and EDTA. In addition, has been shown to hemagglutinate promastigote forms of Leishmania amazonensis. Also inhibits Gram-positive (S.aureus ATCC 25923) (MIC is 31.25 ug/ml) but not Gram-negative (E.coli ATCC 25922) bacteria. Is a calcium-dependent lectin. The protein is C-type lectin BpLec of Bothrops pauloensis (Neuwied's lancehead).